The primary structure comprises 763 residues: Long-chain-fatty-acid--CoA ligase ACSBG2 (763 aa).

Residues 47 to 78 (CSMKPADDPKTERSQMNKTGLASSSRPASNVW) are disordered. Over residues 51-61 (PADDPKTERSQ) the composition is skewed to basic and acidic residues. Polar residues predominate over residues 62 to 78 (MNKTGLASSSRPASNVW). ATP contacts are provided by residues 281 to 289 (TSGTTGQPK), 472 to 477 (ELYGMS), D550, R565, and K678.

This sequence belongs to the ATP-dependent AMP-binding enzyme family. Bubblegum subfamily.

It localises to the cytoplasm. It catalyses the reaction a long-chain fatty acid + ATP + CoA = a long-chain fatty acyl-CoA + AMP + diphosphate. The catalysed reaction is (5Z,8Z,11Z,14Z)-eicosatetraenoate + ATP + CoA = (5Z,8Z,11Z,14Z)-eicosatetraenoyl-CoA + AMP + diphosphate. It carries out the reaction hexadecanoate + ATP + CoA = hexadecanoyl-CoA + AMP + diphosphate. The enzyme catalyses (9Z)-octadecenoate + ATP + CoA = (9Z)-octadecenoyl-CoA + AMP + diphosphate. It catalyses the reaction (9Z,12Z)-octadecadienoate + ATP + CoA = (9Z,12Z)-octadecadienoyl-CoA + AMP + diphosphate. The catalysed reaction is tetracosanoate + ATP + CoA = tetracosanoyl-CoA + AMP + diphosphate. Functionally, mediates activation of long-chain fatty acids for both synthesis of cellular lipids, and degradation via beta-oxidation. Catalyzes the conversion of fatty acids such as long chain and very long-chain fatty acids to their active form acyl-CoAs for both synthesis of cellular lipids, and degradation via beta-oxidation. Can activate diverse saturated, monosaturated and polyunsaturated fatty acids. This chain is Long-chain-fatty-acid--CoA ligase ACSBG2, found in Gallus gallus (Chicken).